Here is a 286-residue protein sequence, read N- to C-terminus: Beta-lactamase TEM-12 (286 aa).

The N-terminal stretch at 1 to 23 (MSIQHFRVALIPFFAAFCLPVFA) is a signal peptide. The Acyl-ester intermediate role is filled by S68. C75 and C121 form a disulfide bridge. Residue E166 is the Proton acceptor of the active site. 232 to 234 (KSG) serves as a coordination point for substrate.

Belongs to the class-A beta-lactamase family.

The enzyme catalyses a beta-lactam + H2O = a substituted beta-amino acid. Its function is as follows. TEM-type are the most prevalent beta-lactamases in enterobacteria; they hydrolyze the beta-lactam bond in susceptible beta-lactam antibiotics, thus conferring resistance to penicillins and cephalosporins such as ceftazidime. This is Beta-lactamase TEM-12 (blaT-12b) from Klebsiella oxytoca.